Consider the following 457-residue polypeptide: Ribosomal protein uS12 methylthiotransferase RimO (457 aa).

The MTTase N-terminal domain occupies 6–116 (PKVGFVSLGC…VMEAVHAALP (111 aa)). Cys15, Cys51, Cys80, Cys147, Cys151, and Cys154 together coordinate [4Fe-4S] cluster. The Radical SAM core domain maps to 133 to 371 (LTPRHYAYLK…AKQAQISALR (239 aa)). The TRAM domain occupies 373 to 441 (ESKIGSVQQC…EHDLFGDALP (69 aa)).

It belongs to the methylthiotransferase family. RimO subfamily. The cofactor is [4Fe-4S] cluster.

The protein localises to the cytoplasm. It catalyses the reaction L-aspartate(89)-[ribosomal protein uS12]-hydrogen + (sulfur carrier)-SH + AH2 + 2 S-adenosyl-L-methionine = 3-methylsulfanyl-L-aspartate(89)-[ribosomal protein uS12]-hydrogen + (sulfur carrier)-H + 5'-deoxyadenosine + L-methionine + A + S-adenosyl-L-homocysteine + 2 H(+). Its function is as follows. Catalyzes the methylthiolation of an aspartic acid residue of ribosomal protein uS12. The polypeptide is Ribosomal protein uS12 methylthiotransferase RimO (Xanthomonas axonopodis pv. citri (strain 306)).